The primary structure comprises 642 residues: Threonine--tRNA ligase (642 aa).

One can recognise a TGS domain in the interval 1–61 (MPVITLPDGS…ENDAQLSIIT (61 aa)). Residues 243–534 (DHRKIGKQLD…LTEEFAGFFP (292 aa)) form a catalytic region. Positions 334, 385, and 511 each coordinate Zn(2+).

The protein belongs to the class-II aminoacyl-tRNA synthetase family. As to quaternary structure, homodimer. The cofactor is Zn(2+).

The protein resides in the cytoplasm. It carries out the reaction tRNA(Thr) + L-threonine + ATP = L-threonyl-tRNA(Thr) + AMP + diphosphate + H(+). Functionally, catalyzes the attachment of threonine to tRNA(Thr) in a two-step reaction: L-threonine is first activated by ATP to form Thr-AMP and then transferred to the acceptor end of tRNA(Thr). Also edits incorrectly charged L-seryl-tRNA(Thr). This is Threonine--tRNA ligase from Enterobacter sp. (strain 638).